The following is a 278-amino-acid chain: HTH-type transcriptional activator RhaS (278 aa).

Residues 174–272 (NLLLAWLEDH…NWSPRDIRQG (99 aa)) form the HTH araC/xylS-type domain. 2 consecutive DNA-binding regions (H-T-H motif) follow at residues 191–212 (DAVA…KQQT) and 239–262 (VTDI…RREF).

Binds DNA as a dimer.

It localises to the cytoplasm. Functionally, activates expression of the rhaBAD and rhaT operons. The polypeptide is HTH-type transcriptional activator RhaS (Escherichia coli O157:H7).